Here is a 422-residue protein sequence, read N- to C-terminus: Histidine--tRNA ligase (422 aa).

The protein belongs to the class-II aminoacyl-tRNA synthetase family. Homodimer.

Its subcellular location is the cytoplasm. The enzyme catalyses tRNA(His) + L-histidine + ATP = L-histidyl-tRNA(His) + AMP + diphosphate + H(+). The polypeptide is Histidine--tRNA ligase (Ruthia magnifica subsp. Calyptogena magnifica).